The primary structure comprises 354 residues: GRAM domain-containing protein 2A (354 aa).

Over residues 1-29 the composition is skewed to polar residues; sequence MTALSRSEATEEGGNQQMHRKTASLNSPV. Residues 1–46 are disordered; that stretch reads MTALSRSEATEEGGNQQMHRKTASLNSPVSCKEKPDRVEEPPDYSL. The segment covering 31–40 has biased composition (basic and acidic residues); the sequence is CKEKPDRVEE. A GRAM domain is found at 72–139; it reads QQYHKLFKDV…VSVQMIKKHK (68 aa). Residues 312-332 form a helical membrane-spanning segment; it reads LLKVFFVLICFLVMSSSYLAF.

The protein resides in the endoplasmic reticulum membrane. It is found in the cell membrane. Its function is as follows. Participates in the organization of endoplasmic reticulum-plasma membrane contact sites (EPCS) with pleiotropic functions including STIM1 recruitment and calcium homeostasis. Constitutive tether that co-localize with ESYT2/3 tethers at endoplasmic reticulum-plasma membrane contact sites in a phosphatidylinositol lipid-dependent manner. Pre-marks the subset of phosphtidylinositol 4,5-biphosphate (PI(4,5)P2)-enriched EPCS destined for the store operated calcium entry pathway (SOCE). This chain is GRAM domain-containing protein 2A, found in Homo sapiens (Human).